The chain runs to 162 residues: Ribose-5-phosphate isomerase B (162 aa).

D-ribulose 5-phosphate-binding positions include Asp11 to His12 and Gly70 to Gly74. Glu75 serves as the catalytic Proton acceptor. The active-site Proton donor is His102. Positions 103, 113, 137, and 141 each coordinate D-ribulose 5-phosphate.

It belongs to the LacAB/RpiB family. In terms of assembly, homodimer.

It carries out the reaction aldehydo-D-ribose 5-phosphate = D-ribulose 5-phosphate. It functions in the pathway carbohydrate degradation; pentose phosphate pathway; D-ribose 5-phosphate from D-ribulose 5-phosphate (non-oxidative stage): step 1/1. Its function is as follows. Catalyzes the interconversion of ribulose-5-P and ribose-5-P. This Mycobacterium bovis (strain ATCC BAA-935 / AF2122/97) protein is Ribose-5-phosphate isomerase B.